The sequence spans 1480 residues: Cystic fibrosis transmembrane conductance regulator (1480 aa).

Residues 1-77 (MQRSPLEKAS…KLINALRRCF (77 aa)) lie on the Cytoplasmic side of the membrane. Residues 78–98 (FWRFMFYGIFLYLGEVTKAVQ) form a helical membrane-spanning segment. The ABC transmembrane type-1 1 domain maps to 81-365 (FMFYGIFLYL…WAVQTWYDSL (285 aa)). Topologically, residues 99–122 (PLLLGRIIASYDPDNKEERSIAIY) are extracellular. A helical membrane pass occupies residues 123–146 (LGIGLCLLFIVRTLLLHPAIFGLH). The Cytoplasmic segment spans residues 147–195 (HIGMQMRIAMFSLIYKKTLKLSSRVLDKISIGQLVSLLSNNLNKFDEGL). The helical transmembrane segment at 196–216 (ALAHFVWIAPLQVALLMGLIW) threads the bilayer. Residues 217–222 (ELLQAS) lie on the Extracellular side of the membrane. Residues 223–243 (AFCGLGFLIVLALFQAGLGRM) traverse the membrane as a helical segment. Residues 244 to 298 (MMKYRDQRAGKISERLVITSEMIENIQSVKAYCWEEAMEKMIENLRQTELKLTRK) lie on the Cytoplasmic side of the membrane. A helical membrane pass occupies residues 299–319 (AAYVRYFNSSAFFFSGFFVVF). At 320–339 (LSVLPYALIKGIILRKIFTT) the chain is on the extracellular side. Residues 340-358 (ISFCIVLRMAVTRQFPWAV) form a helical membrane-spanning segment. At 359–858 (QTWYDSLGAI…YLRYITVHKS (500 aa)) the chain is on the cytoplasmic side. Residues Trp-401, Ser-434, 458 to 465 (GSTGAGKT), and Gln-493 contribute to the ATP site. The ABC transporter 1 domain maps to 423–646 (NGDDSLFFSN…QPDFSSKLMG (224 aa)). Residue Cys-524 is the site of S-palmitoyl cysteine attachment. At Ser-549 the chain carries Phosphoserine. A disordered R region region spans residues 654–831 (SAERRNSILT…EEINEEDLKE (178 aa)). Phosphoserine; by PKA occurs at positions 660 and 670. Ser-686 is subject to Phosphoserine; by PKC. Lys-688 is covalently cross-linked (Glycyl lysine isopeptide (Lys-Gly) (interchain with G-Cter in ubiquitin)). Residues Ser-700 and Ser-712 each carry the phosphoserine; by PKA modification. Phosphothreonine is present on Thr-717. 3 positions are modified to phosphoserine; by PKA: Ser-737, Ser-753, and Ser-768. At Ser-790 the chain carries Phosphoserine; by PKC. Phosphoserine; by PKA is present on residues Ser-795 and Ser-813. A helical transmembrane segment spans residues 859-879 (LIFVLIWCLVIFLAEVAASLV). The 297-residue stretch at 859-1155 (LIFVLIWCLV…AVNSSIDVDS (297 aa)) folds into the ABC transmembrane type-1 2 domain. At 880–918 (VLWLLGNTPLQDKGNSTHSRNNSYAVIITSTSSYYVFYI) the chain is on the extracellular side. Asn-894 and Asn-900 each carry an N-linked (GlcNAc...) asparagine glycan. The discontinuously helical transmembrane segment at 919 to 939 (YVGVADTLLAMGFFRGLPLVH) threads the bilayer. At 940–990 (TLITVSKILHHKMLHSVLQAPMSTLNTLKAGGILNRFSKDIAILDDLLPLT) the chain is on the cytoplasmic side. The helical transmembrane segment at 991-1011 (IFDFIQLLLIVIGAIAVVAVL) threads the bilayer. Topologically, residues 1012-1013 (QP) are extracellular. Residues 1014–1034 (YIFVATVPVIVAFIMLRAYFL) form a helical membrane-spanning segment. Residues 1035–1095 (QTSQQLKQLE…TANWFLYLST (61 aa)) are Cytoplasmic-facing. The chain crosses the membrane as a helical span at residues 1096–1116 (LRWFQMRIEMIFVIFFIAVTF). The Extracellular portion of the chain corresponds to 1117–1130 (ISILTTGEGEGRVG). A helical membrane pass occupies residues 1131–1151 (IILTLAMNIMSTLQWAVNSSI). The Cytoplasmic segment spans residues 1152–1480 (DVDSLMRSVS…TEEEVQDTRL (329 aa)). The ABC transporter 2 domain occupies 1210 to 1443 (MTVKDLTAKY…RSLFRQAISP (234 aa)). ATP-binding positions include Tyr-1219 and 1244–1251 (GRTGSGKS). Residues 1386-1480 (RTLKQAFADC…TEEEVQDTRL (95 aa)) are interaction with GORASP2. Cys-1395 carries S-palmitoyl cysteine lipidation. Phosphoserine is present on residues Ser-1444 and Ser-1456. A disordered region spans residues 1452 to 1480 (HRNSSKCKSKPQIAALKEETEEEVQDTRL). Acidic residues predominate over residues 1470 to 1480 (ETEEEVQDTRL). The PDZ-binding motif lies at 1478-1480 (TRL).

This sequence belongs to the ABC transporter superfamily. ABCC family. CFTR transporter (TC 3.A.1.202) subfamily. Monomer; does not require oligomerization for channel activity. May form oligomers in the membrane. Interacts with SLC26A3, SLC26A6 and SHANK2. Interacts with NHERF1 and MYO6. Interacts (via C-terminus) with GOPC (via PDZ domain); this promotes CFTR internalization and thereby decreases channel activity. Interacts with SLC4A7 through NHERF1. Found in a complex with MYO5B and RAB11A. Interacts with ANO1. Interacts with SLC26A8. Interacts with AHCYL1; the interaction increases CFTR activity. Interacts with CSE1L. The core-glycosylated form interacts with GORASP2 (via PDZ GRASP-type 1 domain) in respone to ER stress. Interacts with MARCHF2; the interaction leads to CFTR ubiqtuitination and degradation. Interacts with ADGRG2. N-glycosylated. In terms of processing, phosphorylated; cAMP treatment promotes phosphorylation and activates the channel. Dephosphorylation decreases the ATPase activity (in vitro). Phosphorylation at PKA sites activates the channel. Phosphorylation at PKC sites enhances the response to phosphorylation by PKA. Phosphorylated by AMPK; this inhibits channel activity. Post-translationally, ubiquitinated, leading to its degradation in the lysosome. Deubiquitination by USP10 in early endosomes enhances its endocytic recycling to the cell membrane. Ubiquitinated by RNF185 during ER stress. Ubiquitinated by MARCHF2. Expressed in the respiratory airway, including bronchial epithelium, and in the female reproductive tract, including oviduct (at protein level). Detected in pancreatic intercalated ducts in the exocrine tissue, on epithelial cells in intralobular striated ducts in sublingual salivary glands, on apical membranes of crypt cells throughout the small and large intestine, and on the reabsorptive duct in eccrine sweat glands. Detected on the equatorial segment of the sperm head (at protein level). Detected in nasal and bronchial superficial epithelium. Expressed by the central cells on the sebaceous glands, dermal adipocytes and, at lower levels, by epithelial cells.

It localises to the apical cell membrane. Its subcellular location is the early endosome membrane. The protein resides in the cell membrane. It is found in the recycling endosome membrane. The protein localises to the endoplasmic reticulum membrane. It localises to the nucleus. It carries out the reaction ATP + H2O + closed Cl(-) channel = ADP + phosphate + open Cl(-) channel.. The enzyme catalyses chloride(in) = chloride(out). It catalyses the reaction hydrogencarbonate(in) = hydrogencarbonate(out). The catalysed reaction is ATP + H2O = ADP + phosphate + H(+). In terms of biological role, epithelial ion channel that plays an important role in the regulation of epithelial ion and water transport and fluid homeostasis. Mediates the transport of chloride ions across the cell membrane. Possesses an intrinsic ATPase activity and utilizes ATP to gate its channel; the passive flow of anions through the channel is gated by cycles of ATP binding and hydrolysis by the ATP-binding domains. The ion channel is also permeable to HCO(3)(-); selectivity depends on the extracellular chloride concentration. In vitro, mediates ATP-dependent glutathione flux. Exerts its function also by modulating the activity of other ion channels and transporters. Plays an important role in airway fluid homeostasis. Contributes to the regulation of the pH and the ion content of the airway surface fluid layer and thereby plays an important role in defense against pathogens. Modulates the activity of the epithelial sodium channel (ENaC) complex, in part by regulating the cell surface expression of the ENaC complex. Inhibits the activity of the ENaC channel containing subunits SCNN1A, SCNN1B and SCNN1G. Inhibits the activity of the ENaC channel containing subunits SCNN1D, SCNN1B and SCNN1G, but not of the ENaC channel containing subunits SCNN1A, SCNN1B and SCNN1G. May regulate bicarbonate secretion and salvage in epithelial cells by regulating the transporter SLC4A7. Can inhibit the chloride channel activity of ANO1. Plays a role in the chloride and bicarbonate homeostasis during sperm epididymal maturation and capacitation. The chain is Cystic fibrosis transmembrane conductance regulator from Homo sapiens (Human).